The following is a 492-amino-acid chain: Probable beta-1,4-xylosyltransferase IRX14H (492 aa).

Residues M1–P33 are Cytoplasmic-facing. The chain crosses the membrane as a helical; Signal-anchor for type II membrane protein span at residues S34–F54. Topologically, residues R55 to S492 are lumenal. N99, N196, and N314 each carry an N-linked (GlcNAc...) asparagine glycan. Positions I457–S492 are disordered. The span at S473–D484 shows a compositional bias: basic and acidic residues.

Belongs to the glycosyltransferase 43 family. As to expression, expressed in developing interfascicular fibers and xylem cells in stems and developing secondary xylem in roots.

The protein resides in the golgi apparatus membrane. Its function is as follows. Involved in the synthesis of the hemicellulose glucuronoxylan, a major component of secondary cell walls. Probably involved in the elongation of glucuronoxylan xylosyl backbone. The protein is Probable beta-1,4-xylosyltransferase IRX14H (IRX14H) of Arabidopsis thaliana (Mouse-ear cress).